The sequence spans 179 residues: Peptidyl-tRNA hydrolase (179 aa).

Tyrosine 15 is a tRNA binding site. Histidine 20 (proton acceptor) is an active-site residue. Positions 66, 68, and 114 each coordinate tRNA.

This sequence belongs to the PTH family. As to quaternary structure, monomer.

It localises to the cytoplasm. The catalysed reaction is an N-acyl-L-alpha-aminoacyl-tRNA + H2O = an N-acyl-L-amino acid + a tRNA + H(+). In terms of biological role, hydrolyzes ribosome-free peptidyl-tRNAs (with 1 or more amino acids incorporated), which drop off the ribosome during protein synthesis, or as a result of ribosome stalling. Its function is as follows. Catalyzes the release of premature peptidyl moieties from peptidyl-tRNA molecules trapped in stalled 50S ribosomal subunits, and thus maintains levels of free tRNAs and 50S ribosomes. The protein is Peptidyl-tRNA hydrolase of Chlamydia trachomatis serovar L2b (strain UCH-1/proctitis).